A 321-amino-acid chain; its full sequence is Glutaminase (321 aa).

Substrate is bound by residues Ser69, Asn120, Glu165, Asn172, Tyr196, Tyr248, and Val266.

It belongs to the glutaminase family. As to quaternary structure, homotetramer.

The catalysed reaction is L-glutamine + H2O = L-glutamate + NH4(+). In Bacteroides fragilis (strain ATCC 25285 / DSM 2151 / CCUG 4856 / JCM 11019 / LMG 10263 / NCTC 9343 / Onslow / VPI 2553 / EN-2), this protein is Glutaminase.